The following is a 329-amino-acid chain: Beta-ketoacyl-[acyl-carrier-protein] synthase III (329 aa).

Active-site residues include C123 and H256. The interval 257–261 (QANIR) is ACP-binding. Residue N286 is part of the active site.

The protein belongs to the thiolase-like superfamily. FabH family. Homodimer.

The protein resides in the cytoplasm. It carries out the reaction malonyl-[ACP] + acetyl-CoA + H(+) = 3-oxobutanoyl-[ACP] + CO2 + CoA. It functions in the pathway lipid metabolism; fatty acid biosynthesis. Its function is as follows. Catalyzes the condensation reaction of fatty acid synthesis by the addition to an acyl acceptor of two carbons from malonyl-ACP. Catalyzes the first condensation reaction which initiates fatty acid synthesis and may therefore play a role in governing the total rate of fatty acid production. Possesses both acetoacetyl-ACP synthase and acetyl transacylase activities. Its substrate specificity determines the biosynthesis of branched-chain and/or straight-chain of fatty acids. This Paraburkholderia phymatum (strain DSM 17167 / CIP 108236 / LMG 21445 / STM815) (Burkholderia phymatum) protein is Beta-ketoacyl-[acyl-carrier-protein] synthase III.